The primary structure comprises 1732 residues: Polycystin-1-like protein 3 (1732 aa).

The first 23 residues, 1–23 (MFFKGGSWLWLYIRTSIILGSEL), serve as a signal peptide directing secretion. At 24-697 (NSPAPHGQNN…IKLFLRVTNN (674 aa)) the chain is on the extracellular side. Residues 30–138 (GQNNCYQLNR…CLLKYYFICQ (109 aa)) enclose the C-type lectin domain. 2 cysteine pairs are disulfide-bonded: C51-C137 and C112-C129. N-linked (GlcNAc...) asparagine glycosylation is found at N286, N363, N515, N537, and N575. Positions 523–685 (TSLNMSTHQL…FVVPRTVNVE (163 aa)) constitute a GAIN-B domain. Disulfide bonds link C635/C663 and C650/C665. The interval 635 to 685 (CYYWEIHNQTWSSAGCQVGPQSTILRTQCLCNHLTFFASDFFVVPRTVNVE) is GPS. A helical transmembrane segment spans residues 698–718 (PVGVSLLASLLGFYVITVVWA). At 719 to 905 (RKKDQADMQK…PWNQFTRVQR (187 aa)) the chain is on the cytoplasmic side. Positions 743 to 860 (FHYLIQVYTG…GDCELDRVFI (118 aa)) constitute a PLAT domain. A helical membrane pass occupies residues 906–926 (LSCCMTLLLCNMVINVMFWKI). The Extracellular portion of the chain corresponds to 927-939 (NSTTAKRDEQMRP). Residues 940-960 (FAVAWSELLVSIHTAVILFPI) form a helical membrane-spanning segment. Over 961–1154 (NLVIGRLFPL…ISNGLSKWLT (194 aa)) the chain is Cytoplasmic. A helical membrane pass occupies residues 1155–1175 (SVCWLLLGFTSLASAFFTALY). Topologically, residues 1176-1198 (SLELSKDQATSWMISIILSVLQN) are extracellular. The helical transmembrane segment at 1199 to 1219 (IFISQPVKVVFFTFLYSLMMS) threads the bilayer. Over 1220 to 1289 (RMPRLNKENE…KLTGDILVQI (70 aa)) the chain is Cytoplasmic. A helical membrane pass occupies residues 1290-1300 (LFLTLLMTAIY). Residues 1301–1461 (SAKNSNRFYL…SFTSLQMSKK (161 aa)) lie on the Extracellular side of the membrane. The chain crosses the membrane as a helical span at residues 1462-1491 (GCVWSIISQVIYYLLVCYYAFIQGCQLKQQ). Topologically, residues 1492 to 1500 (KWRFFTGKR) are cytoplasmic. The chain crosses the membrane as a helical span at residues 1501 to 1519 (NILDTSIILISFILLGLDM). At 1520–1550 (KSISLHKKNMARYRDDQDRFISFYEAVKVNS) the chain is on the extracellular side. Residues 1551–1572 (AATHLVGFPVLLATVQLWNLLR) form a helical membrane-spanning segment. Residues 1573–1589 (HSPRLRVISRTLSRAWD) are Cytoplasmic-facing. A helical membrane pass occupies residues 1590–1614 (EVVGFLLIILILLTGYAIAFNLLFG). The segment at 1613-1651 (FGCSISDYRTFFSSAVTVVGLLMGISHQEEVFALDPVLG) is channel pore-region. At 1615-1647 (CSISDYRTFFSSAVTVVGLLMGISHQEEVFALD) the chain is on the extracellular side. Residues 1648–1667 (PVLGTFLILTSVILMVLVVI) form a helical membrane-spanning segment. Residues 1668–1732 (NLFVSAILMA…SDTEVLDELP (65 aa)) are Cytoplasmic-facing.

The protein belongs to the polycystin family. In terms of assembly, heterotetramer with PKD2L1, composed of 3 subunit of PKD2L1 and 1 subunit of PKD1L3. In terms of processing, autoproteolytically processed at the GPS region of the GAIN-B domain; this cleavage modulates receptor activity. As to expression, highly expressed in placenta, weakly in heart and lung.

Its subcellular location is the cell membrane. The catalysed reaction is Ca(2+)(in) = Ca(2+)(out). The enzyme catalyses Na(+)(in) = Na(+)(out). It catalyses the reaction K(+)(in) = K(+)(out). It carries out the reaction Mg(2+)(in) = Mg(2+)(out). Its activity is regulated as follows. The non-selective cation channel is gated following an off-response property by acid: gated open after the removal of acid stimulus, but not during acid application. Regulation of non-selective cation channel activity by external Ca(2+) is bimodal, first sensitizing and subsequently inactivating the current. In terms of biological role, pore-forming subunit of a heterotetrameric, non-selective cation channel that is permeable to Ca(2+). Also shows permeability towards NA(1+), K(+) and Mg(2+). Heterotetrameric complex channel is activated by external low pH and Ca(2+), but opens only when the extracellular pH rises again and after the removal of acid stimulus. May act as a sour taste receptor in gustatory cells; however, its contribution to sour taste perception is unclear in vivo and may be indirect. The chain is Polycystin-1-like protein 3 from Homo sapiens (Human).